The primary structure comprises 352 residues: Photosystem II D2 protein (352 aa).

A helical transmembrane segment spans residues Cys40–Thr60. His117 contributes to the chlorophyll a binding site. Residues Gly124 to Pro140 traverse the membrane as a helical segment. Residues Gln129 and Asn142 each contribute to the pheophytin a site. The chain crosses the membrane as a helical span at residues Val152–Ser165. Position 197 (His197) interacts with chlorophyll a. Residues Gly207 to Asp227 traverse the membrane as a helical segment. 2 residues coordinate a plastoquinone: His214 and Phe261. His214 is a binding site for Fe cation. His268 contacts Fe cation. A helical transmembrane segment spans residues Gly278–Arg294.

It belongs to the reaction center PufL/M/PsbA/D family. In terms of assembly, PSII is composed of 1 copy each of membrane proteins PsbA, PsbB, PsbC, PsbD, PsbE, PsbF, PsbH, PsbI, PsbJ, PsbK, PsbL, PsbM, PsbT, PsbX, PsbY, PsbZ, Psb30/Ycf12, peripheral proteins PsbO, CyanoQ (PsbQ), PsbU, PsbV and a large number of cofactors. It forms dimeric complexes. The D1/D2 heterodimer binds P680, chlorophylls that are the primary electron donor of PSII, and subsequent electron acceptors. It shares a non-heme iron and each subunit binds pheophytin, quinone, additional chlorophylls, carotenoids and lipids. There is also a Cl(-1) ion associated with D1 and D2, which is required for oxygen evolution. The PSII complex binds additional chlorophylls, carotenoids and specific lipids. serves as cofactor.

It localises to the cellular thylakoid membrane. The enzyme catalyses 2 a plastoquinone + 4 hnu + 2 H2O = 2 a plastoquinol + O2. Functionally, photosystem II (PSII) is a light-driven water:plastoquinone oxidoreductase that uses light energy to abstract electrons from H(2)O, generating O(2) and a proton gradient subsequently used for ATP formation. It consists of a core antenna complex that captures photons, and an electron transfer chain that converts photonic excitation into a charge separation. The D1/D2 (PsbA/PsbD) reaction center heterodimer binds P680, the primary electron donor of PSII as well as several subsequent electron acceptors. D2 is needed for assembly of a stable PSII complex. The polypeptide is Photosystem II D2 protein (Synechococcus sp. (strain RCC307)).